The following is a 222-amino-acid chain: Superoxide dismutase [Cu-Zn], chloroplastic (222 aa).

A chloroplast-targeting transit peptide spans 1-68 (MAAHTILASA…AASKPLTIVA (68 aa)). Cu cation is bound by residues histidine 114, histidine 116, and histidine 131. Cysteine 125 and cysteine 214 form a disulfide bridge. Zn(2+) contacts are provided by histidine 131, histidine 139, histidine 148, and aspartate 151. Position 188 (histidine 188) interacts with Cu cation.

It belongs to the Cu-Zn superoxide dismutase family. Homotetramer. Cu cation is required as a cofactor. It depends on Zn(2+) as a cofactor.

The protein resides in the plastid. Its subcellular location is the chloroplast. It carries out the reaction 2 superoxide + 2 H(+) = H2O2 + O2. Its function is as follows. Destroys radicals which are normally produced within the cells and which are toxic to biological systems. The protein is Superoxide dismutase [Cu-Zn], chloroplastic (SODCP) of Spinacia oleracea (Spinach).